A 207-amino-acid chain; its full sequence is Large ribosomal subunit protein uL4 (207 aa).

Positions 48–89 (SHKVKNRSEVRGGGRKPWRQKGTGRARQGSIRSPQWRGGGVV) are disordered. Residues 60 to 71 (GGRKPWRQKGTG) are compositionally biased toward basic residues.

Belongs to the universal ribosomal protein uL4 family. Part of the 50S ribosomal subunit.

One of the primary rRNA binding proteins, this protein initially binds near the 5'-end of the 23S rRNA. It is important during the early stages of 50S assembly. It makes multiple contacts with different domains of the 23S rRNA in the assembled 50S subunit and ribosome. In terms of biological role, forms part of the polypeptide exit tunnel. The protein is Large ribosomal subunit protein uL4 of Bacillus velezensis (strain DSM 23117 / BGSC 10A6 / LMG 26770 / FZB42) (Bacillus amyloliquefaciens subsp. plantarum).